The following is a 393-amino-acid chain: MTRIGTPLSPTATRVLFCGSGELGKEVVIELQRLGVEVIAVDRYENAPAMQVAHRSHVINMLDGAALRAVIELEKPHFIVPEIEAIATATLVELEAEGFTVIPTARAAQLTMNREGIRRLAAEELKLPTSPYHFADTFEAYSKAVEDLGFPCVVKPVMSSSGKGQSLLKSADDVQKAWDYAQEGGRAGKGRVIIEGFIDFDYEITLLTVRHIGGTTFCAPVGHRQEKGDYQESWQPQAMSPAALAESERVAKAVTESLGGRGMFGVELFIKGDQVWFSEVSPRPHDTGLVTLISQDLSQFALHARAILGLPIPLIRQFGPSASAVILVEGQSTQTAFANLGAALAEPDTALRLFGKPEVNGQRRMGVALARDESIEAARAKATRASSAVVVEL.

N(1)-(5-phospho-beta-D-ribosyl)glycinamide contacts are provided by residues 22–23 and E82; that span reads EL. ATP contacts are provided by residues R114, K155, 160-165, 195-198, and E203; these read SSGKGQ and EGFI. The 190-residue stretch at 119 to 308 folds into the ATP-grasp domain; it reads RLAAEELKLP…QFALHARAIL (190 aa). E267 and E279 together coordinate Mg(2+). N(1)-(5-phospho-beta-D-ribosyl)glycinamide-binding positions include D286, K356, and 363–364; that span reads RR.

This sequence belongs to the PurK/PurT family. In terms of assembly, homodimer.

The catalysed reaction is N(1)-(5-phospho-beta-D-ribosyl)glycinamide + formate + ATP = N(2)-formyl-N(1)-(5-phospho-beta-D-ribosyl)glycinamide + ADP + phosphate + H(+). The protein operates within purine metabolism; IMP biosynthesis via de novo pathway; N(2)-formyl-N(1)-(5-phospho-D-ribosyl)glycinamide from N(1)-(5-phospho-D-ribosyl)glycinamide (formate route): step 1/1. In terms of biological role, involved in the de novo purine biosynthesis. Catalyzes the transfer of formate to 5-phospho-ribosyl-glycinamide (GAR), producing 5-phospho-ribosyl-N-formylglycinamide (FGAR). Formate is provided by PurU via hydrolysis of 10-formyl-tetrahydrofolate. This is Formate-dependent phosphoribosylglycinamide formyltransferase from Pseudomonas syringae pv. tomato (strain ATCC BAA-871 / DC3000).